A 646-amino-acid chain; its full sequence is uncharacterized protein (646 aa).

The next 8 membrane-spanning stretches (helical) occupy residues 20 to 42 (ILSR…LYLL), 55 to 77 (FLAG…IHQV), 97 to 115 (LLHF…HYML), 127 to 149 (YTFD…FSYW), 159 to 181 (IAFV…FFKL), 188 to 206 (ILLG…LLLA), 216 to 238 (YGAV…YHLF), and 251 to 273 (WVTM…IGTA).

It is found in the cell membrane. This is an uncharacterized protein from Bacillus subtilis (strain 168).